The chain runs to 228 residues: Putative NAC domain-containing protein 61 (228 aa).

The NAC domain occupies 5–156 (LSVGFRFYPT…KSGSSRAFDR (152 aa)). 2 disordered regions span residues 77–96 (ARGG…ATGS) and 166–197 (RNLP…QVDL). Residues 80 to 89 (GRPSRTTGSG) are compositionally biased toward low complexity. Over residues 168 to 193 (LPSNGVETSSRATISTSPETSHSGGN) the composition is skewed to polar residues.

It is found in the nucleus. In Arabidopsis thaliana (Mouse-ear cress), this protein is Putative NAC domain-containing protein 61 (NAC061).